We begin with the raw amino-acid sequence, 358 residues long: Alanine racemase (358 aa).

Residue Lys-34 is the Proton acceptor; specific for D-alanine of the active site. Lys-34 bears the N6-(pyridoxal phosphate)lysine mark. Residue Arg-130 coordinates substrate. Tyr-254 acts as the Proton acceptor; specific for L-alanine in catalysis. Met-302 lines the substrate pocket.

The protein belongs to the alanine racemase family. It depends on pyridoxal 5'-phosphate as a cofactor.

It carries out the reaction L-alanine = D-alanine. It participates in amino-acid biosynthesis; D-alanine biosynthesis; D-alanine from L-alanine: step 1/1. In terms of biological role, catalyzes the interconversion of L-alanine and D-alanine. May also act on other amino acids. The protein is Alanine racemase (alr) of Stutzerimonas stutzeri (strain A1501) (Pseudomonas stutzeri).